The following is a 504-amino-acid chain: Arabinose import ATP-binding protein AraG (504 aa).

2 ABC transporter domains span residues leucine 8 to arginine 243 and tyrosine 256 to valine 499. Residue glycine 40 to serine 47 participates in ATP binding.

This sequence belongs to the ABC transporter superfamily. Arabinose importer (TC 3.A.1.2.2) family. The complex is composed of two ATP-binding proteins (AraG), two transmembrane proteins (AraH) and a solute-binding protein (AraF).

The protein resides in the cell inner membrane. The catalysed reaction is L-arabinose(out) + ATP + H2O = L-arabinose(in) + ADP + phosphate + H(+). Part of the ABC transporter complex AraFGH involved in arabinose import. Responsible for energy coupling to the transport system. The polypeptide is Arabinose import ATP-binding protein AraG (Shigella flexneri).